Reading from the N-terminus, the 157-residue chain is Regulatory protein RecX (157 aa).

Belongs to the RecX family.

The protein localises to the cytoplasm. In terms of biological role, modulates RecA activity. This Leptothrix cholodnii (strain ATCC 51168 / LMG 8142 / SP-6) (Leptothrix discophora (strain SP-6)) protein is Regulatory protein RecX.